Here is a 360-residue protein sequence, read N- to C-terminus: Phospho-N-acetylmuramoyl-pentapeptide-transferase (360 aa).

Helical transmembrane passes span 21 to 41 (YITVRAILALLTALLVSLWIG), 73 to 93 (TMGGVMILFAITVSTLLWANL), 94 to 114 (ANPYVWFSLFVLLGYGAIGFV), 132 to 152 (WKYFWLSVIALVAAFGMYAIG), 168 to 188 (IMPQLGLFYIILTYFVIVGTS), 199 to 219 (GLAIMPTVLVAGAFALIAWAT), 235 to 255 (FSAELVVFCTAIVGAGLGFLW), 263 to 283 (VFMGDVGSLALGGALGVVAVL), 288 to 308 (FLLVIMGGVFVVETLSVILQV), and 338 to 358 (VIVRFWIISLMLVLVGLVTLK).

This sequence belongs to the glycosyltransferase 4 family. MraY subfamily. The cofactor is Mg(2+).

The protein resides in the cell inner membrane. It carries out the reaction UDP-N-acetyl-alpha-D-muramoyl-L-alanyl-gamma-D-glutamyl-meso-2,6-diaminopimeloyl-D-alanyl-D-alanine + di-trans,octa-cis-undecaprenyl phosphate = di-trans,octa-cis-undecaprenyl diphospho-N-acetyl-alpha-D-muramoyl-L-alanyl-D-glutamyl-meso-2,6-diaminopimeloyl-D-alanyl-D-alanine + UMP. It functions in the pathway cell wall biogenesis; peptidoglycan biosynthesis. Catalyzes the initial step of the lipid cycle reactions in the biosynthesis of the cell wall peptidoglycan: transfers peptidoglycan precursor phospho-MurNAc-pentapeptide from UDP-MurNAc-pentapeptide onto the lipid carrier undecaprenyl phosphate, yielding undecaprenyl-pyrophosphoryl-MurNAc-pentapeptide, known as lipid I. The sequence is that of Phospho-N-acetylmuramoyl-pentapeptide-transferase from Pasteurella multocida (strain Pm70).